We begin with the raw amino-acid sequence, 1333 residues long: DNA-directed RNA polymerase subunit beta' (1333 aa).

Zn(2+)-binding residues include Cys-60, Cys-62, Cys-75, and Cys-78. Mg(2+)-binding residues include Asp-535, Asp-537, and Asp-539. Residues Cys-901, Cys-983, Cys-990, and Cys-993 each coordinate Zn(2+).

It belongs to the RNA polymerase beta' chain family. As to quaternary structure, the RNAP catalytic core consists of 2 alpha, 1 beta, 1 beta' and 1 omega subunit. When a sigma factor is associated with the core the holoenzyme is formed, which can initiate transcription. It depends on Mg(2+) as a cofactor. The cofactor is Zn(2+).

The catalysed reaction is RNA(n) + a ribonucleoside 5'-triphosphate = RNA(n+1) + diphosphate. In terms of biological role, DNA-dependent RNA polymerase catalyzes the transcription of DNA into RNA using the four ribonucleoside triphosphates as substrates. This Corynebacterium glutamicum (strain ATCC 13032 / DSM 20300 / JCM 1318 / BCRC 11384 / CCUG 27702 / LMG 3730 / NBRC 12168 / NCIMB 10025 / NRRL B-2784 / 534) protein is DNA-directed RNA polymerase subunit beta'.